A 137-amino-acid chain; its full sequence is Phosphatidylinositol N-acetylglucosaminyltransferase subunit P (137 aa).

The next 2 membrane-spanning stretches (helical) occupy residues valine 16 to glycine 36 and methionine 58 to leucine 78.

This sequence belongs to the PIGP family.

It localises to the membrane. The catalysed reaction is a 1,2-diacyl-sn-glycero-3-phospho-(1D-myo-inositol) + UDP-N-acetyl-alpha-D-glucosamine = a 6-(N-acetyl-alpha-D-glucosaminyl)-1-(1,2-diacyl-sn-glycero-3-phospho)-1D-myo-inositol + UDP + H(+). Its pathway is glycolipid biosynthesis; glycosylphosphatidylinositol-anchor biosynthesis. Part of the complex catalyzing the transfer of N-acetylglucosamine from UDP-N-acetylglucosamine to phosphatidylinositol, the first step of GPI biosynthesis. The sequence is that of Phosphatidylinositol N-acetylglucosaminyltransferase subunit P from Arabidopsis thaliana (Mouse-ear cress).